The sequence spans 536 residues: CTP synthase (536 aa).

The tract at residues 1–268 (MSTKYVFVTG…DNLVCEKLHL (268 aa)) is amidoligase domain. Serine 14 contacts CTP. Serine 14 contributes to the UTP binding site. ATP is bound at residue 15 to 20 (ALGKGI). Tyrosine 55 contributes to the L-glutamine binding site. Aspartate 72 is an ATP binding site. The Mg(2+) site is built by aspartate 72 and glutamate 142. CTP contacts are provided by residues 149-151 (DIE), 189-194 (KTKPTQ), and lysine 225. UTP is bound by residues 189-194 (KTKPTQ) and lysine 225. The Glutamine amidotransferase type-1 domain occupies 293–535 (KIALVGKYVE…IKAALEENKS (243 aa)). Glycine 355 provides a ligand contact to L-glutamine. The active-site Nucleophile; for glutamine hydrolysis is cysteine 382. L-glutamine is bound by residues 383–386 (LGMQ), glutamate 406, and arginine 463. Catalysis depends on residues histidine 508 and glutamate 510.

This sequence belongs to the CTP synthase family. As to quaternary structure, homotetramer.

It carries out the reaction UTP + L-glutamine + ATP + H2O = CTP + L-glutamate + ADP + phosphate + 2 H(+). The catalysed reaction is L-glutamine + H2O = L-glutamate + NH4(+). The enzyme catalyses UTP + NH4(+) + ATP = CTP + ADP + phosphate + 2 H(+). The protein operates within pyrimidine metabolism; CTP biosynthesis via de novo pathway; CTP from UDP: step 2/2. Allosterically activated by GTP, when glutamine is the substrate; GTP has no effect on the reaction when ammonia is the substrate. The allosteric effector GTP functions by stabilizing the protein conformation that binds the tetrahedral intermediate(s) formed during glutamine hydrolysis. Inhibited by the product CTP, via allosteric rather than competitive inhibition. Functionally, catalyzes the ATP-dependent amination of UTP to CTP with either L-glutamine or ammonia as the source of nitrogen. Regulates intracellular CTP levels through interactions with the four ribonucleotide triphosphates. The polypeptide is CTP synthase (Clostridium beijerinckii (strain ATCC 51743 / NCIMB 8052) (Clostridium acetobutylicum)).